A 213-amino-acid polypeptide reads, in one-letter code: Orotate phosphoribosyltransferase (213 aa).

Lys-26 lines the 5-phospho-alpha-D-ribose 1-diphosphate pocket. 34–35 (FF) lines the orotate pocket. 5-phospho-alpha-D-ribose 1-diphosphate-binding positions include 72–73 (YK), Arg-99, Lys-100, Lys-103, His-105, and 124–132 (DDVITAGTA). Positions 128 and 156 each coordinate orotate.

Belongs to the purine/pyrimidine phosphoribosyltransferase family. PyrE subfamily. In terms of assembly, homodimer. The cofactor is Mg(2+).

It catalyses the reaction orotidine 5'-phosphate + diphosphate = orotate + 5-phospho-alpha-D-ribose 1-diphosphate. It functions in the pathway pyrimidine metabolism; UMP biosynthesis via de novo pathway; UMP from orotate: step 1/2. In terms of biological role, catalyzes the transfer of a ribosyl phosphate group from 5-phosphoribose 1-diphosphate to orotate, leading to the formation of orotidine monophosphate (OMP). The sequence is that of Orotate phosphoribosyltransferase from Pseudomonas aeruginosa (strain UCBPP-PA14).